The chain runs to 286 residues: Homoserine kinase (286 aa).

78 to 88 (PVAHGLGSSSS) lines the ATP pocket.

Belongs to the GHMP kinase family. Homoserine kinase subfamily.

Its subcellular location is the cytoplasm. The enzyme catalyses L-homoserine + ATP = O-phospho-L-homoserine + ADP + H(+). It functions in the pathway amino-acid biosynthesis; L-threonine biosynthesis; L-threonine from L-aspartate: step 4/5. Functionally, catalyzes the ATP-dependent phosphorylation of L-homoserine to L-homoserine phosphate. The protein is Homoserine kinase of Limosilactobacillus fermentum (strain NBRC 3956 / LMG 18251) (Lactobacillus fermentum).